The chain runs to 367 residues: Riboflavin biosynthesis protein RibD (367 aa).

The CMP/dCMP-type deaminase domain maps to 1 to 123 (MQDEYYMARA…RLQQAGIDVS (123 aa)). A deaminase region spans residues 1 to 145 (MQDEYYMARA…KGFLKRMRTG (145 aa)). Residue His50 coordinates Zn(2+). Glu52 functions as the Proton donor in the catalytic mechanism. Zn(2+)-binding residues include Cys75 and Cys84. Residues 146 to 367 (FPYIQLKLGA…PDVCLHLVGA (222 aa)) form a reductase region. 161–164 (TAMA) is an NADP(+) binding site. Ser168 is a binding site for substrate. Trp170 contacts NADP(+). Arg184 contacts substrate. Positions 196 and 200 each coordinate NADP(+). Residues Leu204 and Arg207 each coordinate substrate. Ser234 is an NADP(+) binding site. A substrate-binding site is contributed by Glu299. Residue 301–304 (GPTL) coordinates NADP(+).

It in the N-terminal section; belongs to the cytidine and deoxycytidylate deaminase family. This sequence in the C-terminal section; belongs to the HTP reductase family. Homodimer. Zn(2+) is required as a cofactor.

The catalysed reaction is 2,5-diamino-6-hydroxy-4-(5-phosphoribosylamino)-pyrimidine + H2O + H(+) = 5-amino-6-(5-phospho-D-ribosylamino)uracil + NH4(+). It carries out the reaction 5-amino-6-(5-phospho-D-ribitylamino)uracil + NADP(+) = 5-amino-6-(5-phospho-D-ribosylamino)uracil + NADPH + H(+). It participates in cofactor biosynthesis; riboflavin biosynthesis; 5-amino-6-(D-ribitylamino)uracil from GTP: step 2/4. It functions in the pathway cofactor biosynthesis; riboflavin biosynthesis; 5-amino-6-(D-ribitylamino)uracil from GTP: step 3/4. Its function is as follows. Converts 2,5-diamino-6-(ribosylamino)-4(3h)-pyrimidinone 5'-phosphate into 5-amino-6-(ribosylamino)-2,4(1h,3h)-pyrimidinedione 5'-phosphate. This is Riboflavin biosynthesis protein RibD (ribD) from Escherichia coli (strain K12).